The chain runs to 500 residues: MIPVVALVGRPNVGKSTLFNRVTRTRDALVADFPGLTRDRKYGRAKLEEQEFILIDTGGIDGTEEGVETKMAEQSLAAIEEADVVLFMVDGRAGLTSSDEAIAKHLRSREKPTFLVVNKIDGIDADAASAEFWQLGMSKVYQIAASHGRGVTSLLELALAPFMEELVEESLRDENGEITDLTEFEDFEDEEKDLTEEDAEKDFARLQDQPIKLAIIGRPNVGKSTLINRILGEERVVVYDMPGTTRDSIYIPMEREGQEYVLIDTAGVRRRGRINETVEKFSVIKTLKAIEDANVVLLVIDARENISDQDLSLLGFALNAGRSLVIAVNKWDGLNNEVKEKVKSELDRRLGFVDFARLHFISALHGTGVGHLYESVQEAYVSATKRVGTSVLTRVMKMAQDDHQPPMVRGRRVKLKYAHAGGYNPPLIVIHGNQVKELPSSYKRFLMNYFRKSLEIMGTPIRIQFQNSENPFEDRGGKLTLSQERQRKRLVGAVKNRNKK.

2 EngA-type G domains span residues 3–166 (PVVA…MEEL) and 211–384 (IKLA…VSAT). GTP is bound by residues 9–16 (GRPNVGKS), 56–60 (DTGGI), 118–121 (NKID), 217–224 (GRPNVGKS), 264–268 (DTAGV), and 329–332 (NKWD). A KH-like domain is found at 385-469 (KRVGTSVLTR…PIRIQFQNSE (85 aa)). The interval 481 to 500 (LSQERQRKRLVGAVKNRNKK) is disordered. Positions 486–500 (QRKRLVGAVKNRNKK) are enriched in basic residues.

It belongs to the TRAFAC class TrmE-Era-EngA-EngB-Septin-like GTPase superfamily. EngA (Der) GTPase family. Associates with the 50S ribosomal subunit.

GTPase that plays an essential role in the late steps of ribosome biogenesis. The protein is GTPase Der of Aliivibrio salmonicida (strain LFI1238) (Vibrio salmonicida (strain LFI1238)).